A 283-amino-acid polypeptide reads, in one-letter code: CASP-like protein 4A3 (283 aa).

The tract at residues 1–86 is disordered; sequence MRSPAKTMPS…VEETPSPIVV (86 aa). The Cytoplasmic segment spans residues 1–135; it reads MRSPAKTMPS…SRREEVVKFS (135 aa). Residues 9 to 20 show a composition bias toward low complexity; the sequence is PSMSPSSVSTEK. The span at 50 to 79 shows a compositional bias: basic and acidic residues; sequence SLDHSSESEKEDAKSKPESRRNKNPGKVEE. The chain crosses the membrane as a helical span at residues 136–156; it reads ALGFRLSEVVLALISFSIMAA. Residues 157–174 are Extracellular-facing; that stretch reads DKTKGWSGDSFDRYKEYR. Residues 175 to 195 form a helical membrane-spanning segment; that stretch reads FCLSVNVVAFVYSSFQACDLA. The Cytoplasmic segment spans residues 196-212; the sequence is YHLVKEKHLISHHLRPL. Residues 213 to 233 form a helical membrane-spanning segment; sequence FEFIIDQVLAYLLMSASTAAV. Topologically, residues 234 to 251 are extracellular; the sequence is TRVDDWVSNWGKDEFTEM. A helical transmembrane segment spans residues 252 to 272; the sequence is ASASIAMSFLAFLAFAFSSLI. The Cytoplasmic portion of the chain corresponds to 273–283; that stretch reads SGYNLFNQGSL.

It belongs to the Casparian strip membrane proteins (CASP) family. Homodimer and heterodimers.

The protein localises to the cell membrane. In Arabidopsis thaliana (Mouse-ear cress), this protein is CASP-like protein 4A3.